Here is a 374-residue protein sequence, read N- to C-terminus: Tuliposide A-converting enzyme b2, amyloplastic (374 aa).

Residues 1–68 (MSVALFCGPP…TNSSLSPSPT (68 aa)) constitute an amyloplast transit peptide. Ser226 functions as the Acyl-ester intermediate in the catalytic mechanism. Residues Asp316 and His348 each act as charge relay system in the active site.

Belongs to the AB hydrolase superfamily. As to quaternary structure, homodimer. Highly expressed in pistil and bulb scales. Lower expression in stem, and barely detected in root, leaf, petal and stamen.

It localises to the plastid. It is found in the amyloplast. It catalyses the reaction 6-tuliposide A = tulipalin A + D-glucose. In terms of biological role, lactone-forming carboxylesterases, specifically catalyzing intramolecular transesterification, but not hydrolysis. Involved in the biosynthesis of tulipalins, defensive chemicals that show antimicrobial activities against a broad range of strains of bacteria and fungi. Substrates are 6-tuliposide A &gt; 6-tuliposide B. In Tulipa gesneriana (Garden tulip), this protein is Tuliposide A-converting enzyme b2, amyloplastic (TCEA-B2).